The primary structure comprises 3097 residues: Neural-cadherin (3097 aa).

A signal peptide spans Met-1 to Ala-36. 2 N-linked (GlcNAc...) asparagine glycosylation sites follow: Asn-97 and Asn-150. In terms of domain architecture, Cadherin 1 spans Val-181–Phe-305. 2 N-linked (GlcNAc...) asparagine glycosylation sites follow: Asn-325 and Asn-426. Cadherin domains are found at residues His-430–Phe-543, Val-554–Phe-651, Ile-660–Phe-756, Val-766–Phe-858, Val-867–Phe-968, Val-978–Phe-1078, Val-1087–Trp-1183, Val-1193–Phe-1299, Val-1307–Phe-1414, Val-1423–Phe-1514, Ile-1523–Phe-1630, Val-1639–Phe-1742, Thr-1749–Phe-1861, Val-1870–Phe-1966, and Leu-1974–Ser-2085. Asn-930 carries an N-linked (GlcNAc...) asparagine glycan. N-linked (GlcNAc...) asparagine glycosylation is present at Asn-1266. Intrachain disulfides connect Cys-2346–Cys-2357, Cys-2351–Cys-2366, Cys-2368–Cys-2377, Cys-2559–Cys-2585, Cys-2592–Cys-2607, Cys-2601–Cys-2616, Cys-2618–Cys-2627, Cys-2787–Cys-2822, Cys-2869–Cys-2880, Cys-2874–Cys-2891, and Cys-2893–Cys-2902. Positions Cys-2346–Cys-2377 constitute an EGF-like 1 domain. The Laminin G-like 1 domain maps to Gln-2379–Cys-2585. The 36-residue stretch at Cys-2592 to Cys-2627 folds into the EGF-like 2 domain. In terms of domain architecture, Laminin G-like 2 spans Thr-2631–Cys-2822. One can recognise an EGF-like 3 domain in the interval Cys-2869 to Cys-2902. Residues Ala-2917–Val-2937 form a helical membrane-spanning segment. Over Tyr-2938–Leu-3097 the chain is Cytoplasmic.

As to expression, in the embryo, the protein first appears in the mesoderm at stage 9 and is present in the myoblasts and muscle fibers by stage 12 and stage 14, respectively. At stage 12 the protein is also located in the axons of the entire CNS, but not in the glial cells. In third instar larvae protein is expressed in the CNS neuropile, photoreceptor axons and precursors of adult muscles.

It is found in the cell membrane. In terms of biological role, cadherins are calcium-dependent cell adhesion proteins. They preferentially interact with themselves in a homophilic manner in connecting cells; cadherins may thus contribute to the sorting of heterogeneous cell types. May associate with arm neural isoform and participate in the transmission of developmental information. This Drosophila melanogaster (Fruit fly) protein is Neural-cadherin (CadN).